The following is a 385-amino-acid chain: Na(+)/H(+) antiporter NhaA (385 aa).

The next 11 helical transmembrane spans lie at 9–29 (YSAI…NVLD), 45–65 (IFGL…VFFF), 87–107 (IIPG…YLSV), 114–134 (GWPV…AIFG), 155–175 (AGIV…WIIV), 198–218 (TFLI…SVYQ), 220–235 (GIHA…IMLN), 245–265 (ALEP…AAMV), 282–302 (ILLG…IIAL), 312–332 (FFNL…SLLM), and 345–365 (QGVI…IILM).

This sequence belongs to the NhaA Na(+)/H(+) (TC 2.A.33) antiporter family.

It is found in the cell membrane. The enzyme catalyses Na(+)(in) + 2 H(+)(out) = Na(+)(out) + 2 H(+)(in). Its function is as follows. Na(+)/H(+) antiporter that extrudes sodium in exchange for external protons. The polypeptide is Na(+)/H(+) antiporter NhaA (Tropheryma whipplei (strain TW08/27) (Whipple's bacillus)).